The following is a 322-amino-acid chain: uncharacterized protein (322 aa).

One can recognise a Radical SAM core domain in the interval 34 to 286 (KFKQKIFKIP…QRLSKDKVPE (253 aa)). [4Fe-4S] cluster-binding residues include Cys50, Cys58, and Cys61.

It belongs to the radical SAM superfamily. It depends on [4Fe-4S] cluster as a cofactor.

This is an uncharacterized protein from Methanocaldococcus jannaschii (strain ATCC 43067 / DSM 2661 / JAL-1 / JCM 10045 / NBRC 100440) (Methanococcus jannaschii).